The chain runs to 421 residues: Diaminopimelate decarboxylase (421 aa).

N6-(pyridoxal phosphate)lysine is present on lysine 63. Pyridoxal 5'-phosphate-binding positions include glycine 242 and 278 to 281 (EPGR). Residues arginine 281, arginine 317, and tyrosine 321 each coordinate substrate. Cysteine 346 serves as the catalytic Proton donor. Glutamate 347 and tyrosine 375 together coordinate substrate. Residue tyrosine 375 coordinates pyridoxal 5'-phosphate.

It belongs to the Orn/Lys/Arg decarboxylase class-II family. LysA subfamily. Homodimer. Pyridoxal 5'-phosphate serves as cofactor.

It catalyses the reaction meso-2,6-diaminopimelate + H(+) = L-lysine + CO2. It participates in amino-acid biosynthesis; L-lysine biosynthesis via DAP pathway; L-lysine from DL-2,6-diaminopimelate: step 1/1. Specifically catalyzes the decarboxylation of meso-diaminopimelate (meso-DAP) to L-lysine. The sequence is that of Diaminopimelate decarboxylase from Zymomonas mobilis subsp. mobilis (strain ATCC 31821 / ZM4 / CP4).